The primary structure comprises 488 residues: Cobyric acid synthase (488 aa).

The 194-residue stretch at valine 248–alanine 441 folds into the GATase cobBQ-type domain. Catalysis depends on cysteine 328, which acts as the Nucleophile. The active site involves histidine 433.

It belongs to the CobB/CobQ family. CobQ subfamily.

Its pathway is cofactor biosynthesis; adenosylcobalamin biosynthesis. Its function is as follows. Catalyzes amidations at positions B, D, E, and G on adenosylcobyrinic A,C-diamide. NH(2) groups are provided by glutamine, and one molecule of ATP is hydrogenolyzed for each amidation. This is Cobyric acid synthase from Burkholderia vietnamiensis (strain G4 / LMG 22486) (Burkholderia cepacia (strain R1808)).